A 128-amino-acid polypeptide reads, in one-letter code: MEIVNALGRRKTAVARVYVREGSGKILINQRSLESYFPSSILRYVVKQPLNKLGVSEQYDITINLKGGGYKGQSEAIRLGIARALIKINSKDKPLLRSEGFVTRDSRKVERKKPGRPKARKKFQFSKR.

The interval serine 106–arginine 128 is disordered. Residues valine 109 to arginine 128 are compositionally biased toward basic residues.

Belongs to the universal ribosomal protein uS9 family.

This is Small ribosomal subunit protein uS9 from Azobacteroides pseudotrichonymphae genomovar. CFP2.